Here is a 247-residue protein sequence, read N- to C-terminus: Cytochrome c oxidase subunit 2 (247 aa).

A signal peptide spans Met-1 to Asn-11. Over Asp-12–Asn-38 the chain is Mitochondrial intermembrane. The helical transmembrane segment at Ile-39 to Lys-59 threads the bilayer. The Mitochondrial matrix portion of the chain corresponds to Asp-60 to Glu-78. Residues Ile-79–Tyr-101 traverse the membrane as a helical segment. Over Leu-102 to Gln-247 the chain is Mitochondrial intermembrane. Cu cation contacts are provided by His-182, Cys-217, Glu-219, Cys-221, His-225, and Met-228. Glu-219 provides a ligand contact to Mg(2+).

The protein belongs to the cytochrome c oxidase subunit 2 family. Component of the cytochrome c oxidase (complex IV, CIV), a multisubunit enzyme composed of a catalytic core of 3 subunits and several supernumerary subunits. The complex exists as a monomer or a dimer and forms supercomplexes (SCs) in the inner mitochondrial membrane with ubiquinol-cytochrome c oxidoreductase (cytochrome b-c1 complex, complex III, CIII). Cu cation is required as a cofactor. The signal sequence of COX2 is processed by IMP1.

Its subcellular location is the mitochondrion inner membrane. It catalyses the reaction 4 Fe(II)-[cytochrome c] + O2 + 8 H(+)(in) = 4 Fe(III)-[cytochrome c] + 2 H2O + 4 H(+)(out). Component of the cytochrome c oxidase, the last enzyme in the mitochondrial electron transport chain which drives oxidative phosphorylation. The respiratory chain contains 3 multisubunit complexes succinate dehydrogenase (complex II, CII), ubiquinol-cytochrome c oxidoreductase (cytochrome b-c1 complex, complex III, CIII) and cytochrome c oxidase (complex IV, CIV), that cooperate to transfer electrons derived from NADH and succinate to molecular oxygen, creating an electrochemical gradient over the inner membrane that drives transmembrane transport and the ATP synthase. Cytochrome c oxidase is the component of the respiratory chain that catalyzes the reduction of oxygen to water. Electrons originating from reduced cytochrome c in the intermembrane space (IMS) are transferred via the dinuclear copper A center (CU(A)) of subunit 2 and heme A of subunit 1 to the active site in subunit 1, a binuclear center (BNC) formed by heme A3 and copper B (CU(B)). The BNC reduces molecular oxygen to 2 water molecules using 4 electrons from cytochrome c in the IMS and 4 protons from the mitochondrial matrix. In Wickerhamomyces canadensis (Yeast), this protein is Cytochrome c oxidase subunit 2 (COX2).